We begin with the raw amino-acid sequence, 157 residues long: Protein Smg homolog (157 aa).

This sequence belongs to the Smg family.

This Shewanella frigidimarina (strain NCIMB 400) protein is Protein Smg homolog.